Consider the following 65-residue polypeptide: Large ribosomal subunit protein bL31 (65 aa).

4 residues coordinate Zn(2+): Cys-16, Cys-18, Cys-36, and Cys-39.

The protein belongs to the bacterial ribosomal protein bL31 family. Type A subfamily. As to quaternary structure, part of the 50S ribosomal subunit. Requires Zn(2+) as cofactor.

Its function is as follows. Binds the 23S rRNA. The polypeptide is Large ribosomal subunit protein bL31 (Geobacter sulfurreducens (strain ATCC 51573 / DSM 12127 / PCA)).